The sequence spans 155 residues: Small ribosomal subunit protein uS7 (155 aa).

It belongs to the universal ribosomal protein uS7 family. Part of the 30S ribosomal subunit. Contacts proteins S9 and S11.

In terms of biological role, one of the primary rRNA binding proteins, it binds directly to 16S rRNA where it nucleates assembly of the head domain of the 30S subunit. Is located at the subunit interface close to the decoding center, probably blocks exit of the E-site tRNA. This is Small ribosomal subunit protein uS7 from Thermotoga neapolitana (strain ATCC 49049 / DSM 4359 / NBRC 107923 / NS-E).